The following is a 345-amino-acid chain: Myb/SANT-like DNA-binding domain-containing protein 4 (345 aa).

Residues 4–77 (LKRKRKSNFS…EVKRRYLDWR (74 aa)) form the Myb-like domain. Residue Lys9 forms a Glycyl lysine isopeptide (Lys-Gly) (interchain with G-Cter in SUMO2) linkage. Residue Ser106 is modified to Phosphoserine. Residues Lys114 and Lys142 each participate in a glycyl lysine isopeptide (Lys-Gly) (interchain with G-Cter in SUMO2) cross-link. Residues 141–160 (VKVEEEERDPQSPEFEIEEE) form a disordered region. Thr188 carries the phosphothreonine modification. Residues 203 to 345 (LLVNIEKQKL…LRIQKEGHLQ (143 aa)) adopt a coiled-coil conformation. Residues Lys237, Lys254, and Lys273 each participate in a glycyl lysine isopeptide (Lys-Gly) (interchain with G-Cter in SUMO2) cross-link.

This Bos taurus (Bovine) protein is Myb/SANT-like DNA-binding domain-containing protein 4 (MSANTD4).